The following is a 62-amino-acid chain: MGRCYISQKSTLFGNKRSHSMNAIKRIWKTNLQSIRIEDENGKIKKIKISARSLKKLNFKRV.

The protein belongs to the bacterial ribosomal protein bL28 family.

In Phytoplasma mali (strain AT), this protein is Large ribosomal subunit protein bL28.